The primary structure comprises 634 residues: Growth hormone receptor (634 aa).

Residues 1–18 form the signal peptide; it reads MDLWQLLLTLAVAGSSDA. The Extracellular portion of the chain corresponds to 19–260; sequence FSGSEATPAF…NPSACEEDFQ (242 aa). Asparagine 46 is a glycosylation site (N-linked (GlcNAc...) asparagine). An intrachain disulfide couples cysteine 56 to cysteine 66. A glycan (N-linked (GlcNAc...) asparagine) is linked at asparagine 73. Cysteine 97 and cysteine 108 form a disulfide bridge. A glycan (N-linked (GlcNAc...) asparagine) is linked at asparagine 111. Cysteines 122 and 136 form a disulfide. Residues 147-250 enclose the Fibronectin type-III domain; it reads PPVGLNWTLL…EVLLITFPQM (104 aa). N-linked (GlcNAc...) asparagine glycans are attached at residues asparagine 152, asparagine 157, and asparagine 196. Residues 236–240 carry the WSXWS motif motif; the sequence is YGKFS. Residues 261–284 traverse the membrane as a helical segment; that stretch reads FPWFLIIIFGILGLTVTLFLLIFS. Topologically, residues 285-634 are cytoplasmic; the sequence is KQQRIKMLIL…STDQLNKIMP (350 aa). A required for JAK2 binding region spans residues 290–375; sequence KMLILPPVPV…HEKSLSIFGA (86 aa). Residues 293–301 carry the Box 1 motif motif; the sequence is ILPPVPVPK. The short motif at 336–345 is the UbE motif element; that stretch reads DSWVEFIELD. Serine 337 carries the phosphoserine modification. Positions 451 to 471 are disordered; sequence KPRPLPIGGTESTHQAVHTQL. A compositionally biased stretch (polar residues) spans 460–471; sequence TESTHQAVHTQL. 2 positions are modified to phosphotyrosine: tyrosine 483 and tyrosine 591.

This sequence belongs to the type I cytokine receptor family. Type 1 subfamily. In terms of assembly, on growth hormone (GH) binding, forms homodimers and binds JAK2 via a box 1-containing domain. In terms of processing, the soluble form (GHBP) is produced by phorbol ester-promoted proteolytic cleavage at the cell surface (shedding) by ADAM17/TACE. Shedding is inhibited by growth hormone (GH) binding to the receptor probably due to a conformational change in GHR rendering the receptor inaccessible to ADAM17. Post-translationally, on GH binding, phosphorylated on tyrosine residues in the cytoplasmic domain by JAK2. Ubiquitinated by the ECS(SOCS2) complex following ligand-binding and phosphorylation by JAK2, leading to its degradation by the proteasome. Regulation by the ECS(SOCS2) complex acts as a negative feedback loop of growth hormone receptor signaling. Ubiquitination is not sufficient for GHR internalization.

It is found in the cell membrane. The protein localises to the secreted. Receptor for pituitary gland growth hormone (GH1) involved in regulating postnatal body growth. On ligand binding, couples to the JAK2/STAT5 pathway. Its function is as follows. The soluble form (GHBP) acts as a reservoir of growth hormone in plasma and may be a modulator/inhibitor of GH signaling. The protein is Growth hormone receptor (GHR) of Ovis aries (Sheep).